A 102-amino-acid polypeptide reads, in one-letter code: Cytochrome b (102 aa).

3 helical membrane passes run 1–21, 45–66, and 81–101; these read FGSL…FLAM, WLIR…YLHI, and WNIG…GYVL. Positions 51 and 65 each coordinate heme b.

This sequence belongs to the cytochrome b family. In terms of assembly, the cytochrome bc1 complex contains 3 respiratory subunits (MT-CYB, CYC1 and UQCRFS1), 2 core proteins (UQCRC1 and UQCRC2) and probably 6 low-molecular weight proteins. Requires heme b as cofactor.

The protein localises to the mitochondrion inner membrane. Functionally, component of the ubiquinol-cytochrome c reductase complex (complex III or cytochrome b-c1 complex) that is part of the mitochondrial respiratory chain. The b-c1 complex mediates electron transfer from ubiquinol to cytochrome c. Contributes to the generation of a proton gradient across the mitochondrial membrane that is then used for ATP synthesis. The chain is Cytochrome b (mt-cyb) from Megalops atlanticus (Tarpon).